The primary structure comprises 134 residues: Methylglyoxal synthase (134 aa).

The MGS-like domain maps to 1 to 134; that stretch reads MHIALIAHDE…DWRDLRRNDE (134 aa). Residues His-8, Lys-12, 34-37, and 54-55 contribute to the substrate site; these read TGTT and SG. Catalysis depends on Asp-60, which acts as the Proton donor/acceptor. Position 87 (His-87) interacts with substrate.

This sequence belongs to the methylglyoxal synthase family.

It catalyses the reaction dihydroxyacetone phosphate = methylglyoxal + phosphate. Its function is as follows. Catalyzes the formation of methylglyoxal from dihydroxyacetone phosphate. This chain is Methylglyoxal synthase, found in Listeria monocytogenes serotype 4b (strain CLIP80459).